The following is a 336-amino-acid chain: Structure-specific endonuclease subunit SLX1 (336 aa).

The GIY-YIG domain occupies 21–104 (SFYGVYLLQS…QHCHETRHIK (84 aa)). Residues 37-57 (FYIGSTPDPPRRLRQHNGDLK) are disordered. The SLX1-type zinc finger occupies 214–290 (CALCLEPIEQ…PATVNRCCSC (77 aa)).

It belongs to the SLX1 family. As to quaternary structure, forms a heterodimer with SLX4. It depends on a divalent metal cation as a cofactor.

The protein resides in the nucleus. Functionally, catalytic subunit of the SLX1-SLX4 structure-specific endonuclease that resolves DNA secondary structures generated during DNA repair and recombination. Has endonuclease activity towards branched DNA substrates, introducing single-strand cuts in duplex DNA close to junctions with ss-DNA. This chain is Structure-specific endonuclease subunit SLX1, found in Scheffersomyces stipitis (strain ATCC 58785 / CBS 6054 / NBRC 10063 / NRRL Y-11545) (Yeast).